A 1109-amino-acid chain; its full sequence is Protein translocase subunit SecA (1109 aa).

ATP is bound by residues glutamine 175, 193-197 (GEGKT), and aspartate 695. Residues 1038 to 1109 (VRQAAPEQRQ…KYKNCHGRNS (72 aa)) are disordered. Composition is skewed to basic and acidic residues over residues 1045–1059 (QRQD…KQDL) and 1071–1088 (DTRE…KTVG). Zn(2+)-binding residues include cysteine 1093, cysteine 1095, cysteine 1104, and histidine 1105. Residues 1099–1109 (KKYKNCHGRNS) show a composition bias toward basic residues.

This sequence belongs to the SecA family. Monomer and homodimer. Part of the essential Sec protein translocation apparatus which comprises SecA, SecYEG and auxiliary proteins SecDF. Other proteins may also be involved. Requires Zn(2+) as cofactor.

Its subcellular location is the cell inner membrane. The protein localises to the cytoplasm. The enzyme catalyses ATP + H2O + cellular proteinSide 1 = ADP + phosphate + cellular proteinSide 2.. Functionally, part of the Sec protein translocase complex. Interacts with the SecYEG preprotein conducting channel. Has a central role in coupling the hydrolysis of ATP to the transfer of proteins into and across the cell membrane, serving as an ATP-driven molecular motor driving the stepwise translocation of polypeptide chains across the membrane. The polypeptide is Protein translocase subunit SecA (Bacteroides fragilis (strain ATCC 25285 / DSM 2151 / CCUG 4856 / JCM 11019 / LMG 10263 / NCTC 9343 / Onslow / VPI 2553 / EN-2)).